Reading from the N-terminus, the 274-residue chain is Mitochondrial S-adenosylmethionine carrier protein (274 aa).

3 Solcar repeats span residues 4–77 (PGFT…VKSL), 86–168 (FKPV…LKAL), and 177–265 (VDSW…ARSL). A run of 6 helical transmembrane segments spans residues 5-25 (GFTA…LILF), 49-69 (IYAG…AFFL), 85-105 (HFKP…ACLI), 142-162 (RGYK…FPLW), 182-202 (SAVC…PLDV), and 238-258 (FAGV…FLGA).

The protein belongs to the mitochondrial carrier (TC 2.A.29) family.

The protein localises to the mitochondrion inner membrane. It carries out the reaction S-adenosyl-L-homocysteine(out) + S-adenosyl-L-methionine(in) = S-adenosyl-L-homocysteine(in) + S-adenosyl-L-methionine(out). Mitochondrial S-adenosyl-L-methionine/S-adenosyl-L-homocysteine antiporter. Mediates the exchange of cytosolic S-adenosyl-L-methionine, the predominant methyl-group donor for macromolecule methylation processes, for mitochondrial S-adenosylhomocysteine(SAH), a by-product of methylation reactions. The sequence is that of Mitochondrial S-adenosylmethionine carrier protein from Mus musculus (Mouse).